The primary structure comprises 252 residues: Auxin-induced in root cultures protein 12 (252 aa).

Residues 1 to 25 (MASSSSSLLILAVACFVSLISPAIS) form the signal peptide. One can recognise a DOMON domain in the interval 49-165 (LNSYLHYTYN…DSVNQVWQIG (117 aa)). Residues Asn58 and Asn61 are each glycosylated (N-linked (GlcNAc...) asparagine). Met91 is a heme binding site. N-linked (GlcNAc...) asparagine glycans are attached at residues Asn114 and Asn167. A heme-binding site is contributed by His176. The segment at 193–224 (EDAAPGSAPSPGSAPAPGTSGSTTPGTAAGGP) is disordered. Low complexity predominate over residues 195 to 219 (AAPGSAPSPGSAPAPGTSGSTTPGT). Residue Asn226 is the site of GPI-anchor amidated asparagine attachment. Positions 227 to 252 (AGSLTRNVNFGVNLGILVLLGSIFIF) are cleaved as a propeptide — removed in mature form.

The cofactor is heme.

It is found in the cell membrane. In terms of biological role, one-heme-containing cytochrome. The sequence is that of Auxin-induced in root cultures protein 12 (AIR12) from Arabidopsis thaliana (Mouse-ear cress).